We begin with the raw amino-acid sequence, 195 residues long: Protein A43 (195 aa).

The signal sequence occupies residues 1–21 (MMIKWIISILTMSIMPVLVYS). Residues 23–166 (SIFRFRSEDV…YKDINDKYND (144 aa)) lie on the Extracellular side of the membrane. Asparagine 66 and asparagine 115 each carry an N-linked (GlcNAc...) asparagine; by host glycan. Residues 167 to 187 (IYDFTAICMLIASTLIVTIYV) traverse the membrane as a helical segment. Residues 188 to 195 (FKKIKMNS) lie on the Cytoplasmic side of the membrane.

The protein belongs to the orthopoxvirus OPG172 protein family.

The protein localises to the host membrane. The protein resides in the host cell surface. In Homo sapiens (Human), this protein is Protein A43 (OPG172).